We begin with the raw amino-acid sequence, 369 residues long: Glutamate 5-kinase (369 aa).

K9 contacts ATP. Substrate contacts are provided by S49, D136, and N148. ATP contacts are provided by residues T168–D169 and T210–K216. The region spanning R275–W355 is the PUA domain.

Belongs to the glutamate 5-kinase family.

Its subcellular location is the cytoplasm. It catalyses the reaction L-glutamate + ATP = L-glutamyl 5-phosphate + ADP. It participates in amino-acid biosynthesis; L-proline biosynthesis; L-glutamate 5-semialdehyde from L-glutamate: step 1/2. Its function is as follows. Catalyzes the transfer of a phosphate group to glutamate to form L-glutamate 5-phosphate. The sequence is that of Glutamate 5-kinase from Neisseria meningitidis serogroup C / serotype 2a (strain ATCC 700532 / DSM 15464 / FAM18).